A 2541-amino-acid polypeptide reads, in one-letter code: Talin-1 (2541 aa).

The 318-residue stretch at 86-403 folds into the FERM domain; sequence RPLKIRMLDG…GYIDIILKKK (318 aa). Residues 280–435 form an interaction with LAYN region; it reads FMAHKNCGNM…PKKSTVLQQQ (156 aa). The segment at 482-655 is helical bundle R1; it reads RGHMPPLTSA…QTSGELLQQI (174 aa). The helical bundle R2 stretch occupies residues 656 to 786; it reads GESDTDPRFQ…ALNDLLQHIK (131 aa). A helical bundle R3 region spans residues 787-911; sequence QHATGGQPIG…NAAAQNAIKK (125 aa). The segment at 913–1043 is helical bundle R4; the sequence is LVHKLEHAAK…RTAAQKAQEA (131 aa). Positions 1045–1205 are helical bundle R5; that stretch reads GPLEIDSALG…NRCVNCLPGQ (161 aa). The segment at 1206 to 1356 is helical bundle R6; it reads RDVDAAIRMV…QLITMCTQQA (151 aa). Residues 1357–1452 form a helical bundle R7A region; sequence PGQKECDNAL…AYLVGVSDPN (96 aa). An interaction with VCL and F-actin region spans residues 1358 to 1658; it reads GQKECDNALR…NMRDKAPGQR (301 aa). The helical bundle R8 stretch occupies residues 1460 to 1579; the sequence is LVDPTQFARA…NLTAFASNPE (120 aa). The O-linked (GlcNAc) threonine glycan is linked to Thr-1486. Residues 1580–1652 form a helical bundle R7B region; that stretch reads FATVPAQISP…IKKLITNMRD (73 aa). The helical bundle R9 stretch occupies residues 1654 to 1821; sequence APGQRECDEA…TLNEAASAAG (168 aa). The tract at residues 1822–1972 is helical bundle R10; sequence VVGGMVDSIT…VLAALQAGNR (151 aa). O-linked (GlcNAc) threonine glycosylation is present at Thr-1889. The helical bundle R11 stretch occupies residues 1973 to 2139; the sequence is GTQACITAAS…TVKAVEDEAT (167 aa). Residues 2140–2293 are helical bundle R12; sequence KGTRALEATI…QAAEAMKGTE (154 aa). Positions 2292 to 2531 constitute an I/LWEQ domain; the sequence is TEWVDPEDPT…MIRQQQYKFL (240 aa). The tract at residues 2299–2481 is helical bundle R13; sequence DPTVIAENEL…AAQKAAAFQD (183 aa).

Interacts with PIP5K1C and NRAP. Binds with high affinity to vinculin VCL and with low affinity to integrins. Interacts with APBB1IP; this inhibits VCL binding. Interacts with F-actin. Interacts with LAYN. Interacts with THSD1. In terms of processing, phosphorylated.

It is found in the cell projection. Its subcellular location is the ruffle membrane. It localises to the cytoplasm. The protein localises to the cytoskeleton. The protein resides in the cell surface. It is found in the cell junction. Its subcellular location is the focal adhesion. In terms of biological role, high molecular weight cytoskeletal protein concentrated at regions of cell-substratum contact and, in lymphocytes, at cell-cell contacts. Involved in connections of major cytoskeletal structures to the plasma membrane. The chain is Talin-1 (TLN1) from Gallus gallus (Chicken).